Reading from the N-terminus, the 250-residue chain is NAD(P)H-quinone oxidoreductase subunit K (250 aa).

[4Fe-4S] cluster-binding residues include Cys63, Cys64, Cys128, and Cys159.

The protein belongs to the complex I 20 kDa subunit family. NDH-1 can be composed of about 15 different subunits; different subcomplexes with different compositions have been identified which probably have different functions. The cofactor is [4Fe-4S] cluster.

The protein localises to the cellular thylakoid membrane. It catalyses the reaction a plastoquinone + NADH + (n+1) H(+)(in) = a plastoquinol + NAD(+) + n H(+)(out). The enzyme catalyses a plastoquinone + NADPH + (n+1) H(+)(in) = a plastoquinol + NADP(+) + n H(+)(out). Its function is as follows. NDH-1 shuttles electrons from an unknown electron donor, via FMN and iron-sulfur (Fe-S) centers, to quinones in the respiratory and/or the photosynthetic chain. The immediate electron acceptor for the enzyme in this species is believed to be plastoquinone. Couples the redox reaction to proton translocation, and thus conserves the redox energy in a proton gradient. Cyanobacterial NDH-1 also plays a role in inorganic carbon-concentration. The polypeptide is NAD(P)H-quinone oxidoreductase subunit K (Rippkaea orientalis (strain PCC 8801 / RF-1) (Cyanothece sp. (strain PCC 8801))).